We begin with the raw amino-acid sequence, 177 residues long: Large ribosomal subunit protein uL16 (177 aa).

Belongs to the universal ribosomal protein uL16 family.

This chain is Large ribosomal subunit protein uL16, found in Natronomonas pharaonis (strain ATCC 35678 / DSM 2160 / CIP 103997 / JCM 8858 / NBRC 14720 / NCIMB 2260 / Gabara) (Halobacterium pharaonis).